Consider the following 620-residue polypeptide: Probable potassium transport system protein Kup 1 (620 aa).

12 helical membrane passes run 10 to 30 (LLISAIGVVYGDIGTSPLYAL), 50 to 70 (VLSLVFWTVMLLVTVKYVIVI), 102 to 122 (MLLGVIAAALFYGDSMITPAI), 138 to 158 (LTPYVVPITAVVLTGLFMIQK), 168 to 188 (FGPVMCLWFLVLALLGIVNIV), 211 to 231 (MMSFFALGSIVLAVTGGEALY), 246 to 266 (WFALVLPALLLNYFGQGALLL), 284 to 304 (MVVPMVGLATCATVIASQAVI), 336 to 356 (IYIPFTNWTLYIAVMALVIGF), 368 to 388 (IAVTGTMMIDTILVAFVMALM), 393 to 413 (WIAVAAVAGTLLLVDLAFFFA), and 415 to 435 (IIKVAQGGWFPLFIGVLSFTV).

This sequence belongs to the HAK/KUP transporter (TC 2.A.72) family.

The protein resides in the cell inner membrane. It carries out the reaction K(+)(in) + H(+)(in) = K(+)(out) + H(+)(out). Transport of potassium into the cell. Likely operates as a K(+):H(+) symporter. This chain is Probable potassium transport system protein Kup 1, found in Rhodopseudomonas palustris (strain BisB18).